The primary structure comprises 315 residues: MTIDSGFNHITVLLDEAVEALAVRPDGCYLDGTFGRGGHSRLILSKLGPDGRLIGFDKDPQAIATGQTLAAEDGRFVVVQRSFAELGSVVAERGLTGKVSGILLDLGVSSPQLDDAERGFSFLNDGPLDMRMDPSRGISAAEFVNTAPVEEIARVFKEYGEERFSGRMARAVVERRDVTPFERTADLAEVLKVANPAWEKGKNPATRAFQGLRIQVNNELGDLEAGLEAALECLEVGGRLVVISFHSLEDRIVKLFMRKLVKGEADNLPRNLPVRHVAFEPKIKVHGKAQTASDAELKANPRSRSAVMRVAEKLR.

Residues 37-39 (GGH), Asp57, Phe83, Asp105, and Gln112 contribute to the S-adenosyl-L-methionine site.

The protein belongs to the methyltransferase superfamily. RsmH family.

The protein localises to the cytoplasm. The enzyme catalyses cytidine(1402) in 16S rRNA + S-adenosyl-L-methionine = N(4)-methylcytidine(1402) in 16S rRNA + S-adenosyl-L-homocysteine + H(+). In terms of biological role, specifically methylates the N4 position of cytidine in position 1402 (C1402) of 16S rRNA. The protein is Ribosomal RNA small subunit methyltransferase H of Pseudomonas fluorescens (strain Pf0-1).